Reading from the N-terminus, the 218-residue chain is Protease PrsW (218 aa).

The chain crosses the membrane as a helical span at residues Met-1 to Asp-23. Over Gln-24 to Val-30 the chain is Cytoplasmic. A helical transmembrane segment spans residues His-31–Val-53. Residues Leu-54 to Asp-98 are Extracellular-facing. A helical transmembrane segment spans residues Gly-99–Gly-121. Over His-122–Val-129 the chain is Cytoplasmic. A helical membrane pass occupies residues Arg-130–Lys-151. Residues Ala-152 to Phe-180 are Extracellular-facing. A helical membrane pass occupies residues Ile-181–Gly-203. Residues Leu-204 to Val-218 are Cytoplasmic-facing.

The protein belongs to the protease PrsW family.

The protein resides in the cell membrane. Functionally, involved in the degradation of anti-sigma-W factor RsiW. Responsible for Site-1 cleavage of the RsiW anti-sigma factor. This results, after two other proteolytic steps catalyzed by the RasP and ClpXP proteases, in the release of SigW and the transcription activation of the genes under the control of the sigma-W factor. Seems to be responsible for sensing antimicrobial peptides that damage the cell membrane and other agents that cause cell envelope stress. Therefore it is a protease governing regulated intramembrane proteolysis and resistance to antimicrobial peptides in B.subtilis. The chain is Protease PrsW from Bacillus subtilis (strain 168).